A 290-amino-acid chain; its full sequence is Urease accessory protein UreD (290 aa).

Belongs to the UreD family. As to quaternary structure, ureD, UreF and UreG form a complex that acts as a GTP-hydrolysis-dependent molecular chaperone, activating the urease apoprotein by helping to assemble the nickel containing metallocenter of UreC. The UreE protein probably delivers the nickel.

It localises to the cytoplasm. Required for maturation of urease via the functional incorporation of the urease nickel metallocenter. The chain is Urease accessory protein UreD from Paenarthrobacter aurescens (strain TC1).